Consider the following 547-residue polypeptide: DNA mismatch repair protein MutL (547 aa).

This sequence belongs to the DNA mismatch repair MutL/HexB family.

This protein is involved in the repair of mismatches in DNA. It is required for dam-dependent methyl-directed DNA mismatch repair. May act as a 'molecular matchmaker', a protein that promotes the formation of a stable complex between two or more DNA-binding proteins in an ATP-dependent manner without itself being part of a final effector complex. The sequence is that of DNA mismatch repair protein MutL from Deinococcus radiodurans (strain ATCC 13939 / DSM 20539 / JCM 16871 / CCUG 27074 / LMG 4051 / NBRC 15346 / NCIMB 9279 / VKM B-1422 / R1).